We begin with the raw amino-acid sequence, 474 residues long: Cysteine--tRNA ligase (474 aa).

Residue Cys30 coordinates Zn(2+). The 'HIGH' region motif lies at 32–42; that stretch reads PTVYNFAHIGN. Zn(2+)-binding residues include Cys212, His237, and Glu241. The 'KMSKS' region signature appears at 270-274; the sequence is KMSKS. Residue Lys273 participates in ATP binding.

It belongs to the class-I aminoacyl-tRNA synthetase family. Monomer. The cofactor is Zn(2+).

The protein localises to the cytoplasm. It catalyses the reaction tRNA(Cys) + L-cysteine + ATP = L-cysteinyl-tRNA(Cys) + AMP + diphosphate. This is Cysteine--tRNA ligase from Leptospira borgpetersenii serovar Hardjo-bovis (strain JB197).